A 349-amino-acid chain; its full sequence is Phosphoribosylformylglycinamidine cyclo-ligase (349 aa).

This sequence belongs to the AIR synthase family.

It localises to the cytoplasm. The enzyme catalyses 2-formamido-N(1)-(5-O-phospho-beta-D-ribosyl)acetamidine + ATP = 5-amino-1-(5-phospho-beta-D-ribosyl)imidazole + ADP + phosphate + H(+). The protein operates within purine metabolism; IMP biosynthesis via de novo pathway; 5-amino-1-(5-phospho-D-ribosyl)imidazole from N(2)-formyl-N(1)-(5-phospho-D-ribosyl)glycinamide: step 2/2. This Psychrobacter arcticus (strain DSM 17307 / VKM B-2377 / 273-4) protein is Phosphoribosylformylglycinamidine cyclo-ligase.